Reading from the N-terminus, the 180-residue chain is NADH-quinone oxidoreductase subunit I (180 aa).

4Fe-4S ferredoxin-type domains are found at residues 48-80 (IVLT…LQKA) and 90-119 (EFFR…LTPD). [4Fe-4S] cluster-binding residues include Cys60, Cys63, Cys66, Cys70, Cys99, Cys102, Cys105, and Cys109.

Belongs to the complex I 23 kDa subunit family. NDH-1 is composed of 13 different subunits. Subunits NuoA, H, J, K, L, M, N constitute the membrane sector of the complex. The cofactor is [4Fe-4S] cluster.

The protein resides in the cell inner membrane. It carries out the reaction a quinone + NADH + 5 H(+)(in) = a quinol + NAD(+) + 4 H(+)(out). In terms of biological role, NDH-1 shuttles electrons from NADH, via FMN and iron-sulfur (Fe-S) centers, to quinones in the respiratory chain. The immediate electron acceptor for the enzyme in this species is believed to be ubiquinone. Couples the redox reaction to proton translocation (for every two electrons transferred, four hydrogen ions are translocated across the cytoplasmic membrane), and thus conserves the redox energy in a proton gradient. This Cronobacter sakazakii (strain ATCC BAA-894) (Enterobacter sakazakii) protein is NADH-quinone oxidoreductase subunit I.